The primary structure comprises 653 residues: Transmembrane and coiled-coil domains protein 1 (653 aa).

Met-1 bears the N-acetylmethionine mark. 4 disordered regions span residues Met-1–Ser-35, His-58–Glu-78, Pro-112–Ser-165, and Thr-204–Pro-227. Residues Met-1–Asn-591 are Cytoplasmic-facing. Positions Gln-20–Leu-34 are enriched in basic and acidic residues. The span at Ser-64–Gln-74 shows a compositional bias: polar residues. A compositionally biased stretch (basic residues) spans Pro-113 to Arg-125. Residues Pro-135 to Glu-144 are compositionally biased toward polar residues. Residues Arg-153–Ser-165 show a composition bias toward low complexity. A compositionally biased stretch (polar residues) spans Thr-204–Thr-218. The stretch at Gln-228 to Gly-313 forms a coiled coil. Ser-382 and Ser-414 each carry phosphoserine. Residues Pro-415–Thr-437 are disordered. The span at Ser-424–Thr-437 shows a compositional bias: polar residues. Residues Gly-458–Gly-576 adopt a coiled-coil conformation. The next 2 helical transmembrane spans lie at Ile-592–Val-612 and Leu-625–Val-645. Residues Glu-646–Arg-653 lie on the Cytoplasmic side of the membrane.

It belongs to the TEX28 family. As to quaternary structure, may form homodimers and heterodimers with TMCC2 or TMCC3 via the coiled-coil domains. Interacts with ribosomal proteins RPL4 and RPS6.

It localises to the endoplasmic reticulum membrane. Its function is as follows. Endoplasmic reticulum membrane protein that promotes endoplasmic reticulum-associated endosome fission. Localizes to contact sites between the endoplasmic reticulum and endosomes and acts by promoting recruitment of the endoplasmic reticulum to endosome tubules for fission. Endosome membrane fission of early and late endosomes is essential to separate regions destined for lysosomal degradation from carriers to be recycled to the plasma membrane. This Homo sapiens (Human) protein is Transmembrane and coiled-coil domains protein 1.